The following is a 73-amino-acid chain: Putative membrane protein insertion efficiency factor (73 aa).

This sequence belongs to the UPF0161 family.

The protein localises to the cell inner membrane. Its function is as follows. Could be involved in insertion of integral membrane proteins into the membrane. This is Putative membrane protein insertion efficiency factor from Neisseria meningitidis serogroup C / serotype 2a (strain ATCC 700532 / DSM 15464 / FAM18).